The primary structure comprises 364 residues: MYIKNVHLINFRNYDDMYLELSPNTNIFVGNNAQGKTNILESIYYSSIGKSHRTNKDKDLIKWDKNNTYLRTYVSRERLDKTIDINIFKNGKKAITVNKIKIKKISELMGNLNVVMFSPEDLRIIKDSPGNRRKFLDIELCKINNVYYHDLVQYNKILSERNTALKNWNNKINDIIDIYDEQLSKYGAFIIKERNKYLDKLNIIGKNIHKKITNDLEDINFRYLTNIKDFDNAEKELLIVLKKNRKKDLERNSTSIGPHRDDFEVSINNIDTRIFGSQGQQRTAVLTLKFASLEIIKNIIGEYPVLLLDDVLSELDSNRQKFVLNSIDKIQTIITCTGIEEIDKYLDKKQSQLYLVNNGKIKRV.

30-37 serves as a coordination point for ATP; the sequence is GNNAQGKT.

It belongs to the RecF family.

It localises to the cytoplasm. The RecF protein is involved in DNA metabolism; it is required for DNA replication and normal SOS inducibility. RecF binds preferentially to single-stranded, linear DNA. It also seems to bind ATP. This is DNA replication and repair protein RecF from Clostridium botulinum (strain ATCC 19397 / Type A).